The chain runs to 454 residues: uncharacterized protein (454 aa).

Positions 73, 79, 82, and 154 each coordinate [4Fe-4S] cluster. Positions 279, 307, 328, and 381 each coordinate S-adenosyl-L-methionine. Residue cysteine 408 is the Nucleophile of the active site.

This sequence belongs to the class I-like SAM-binding methyltransferase superfamily. RNA M5U methyltransferase family.

This is an uncharacterized protein from Leptospira interrogans serogroup Icterohaemorrhagiae serovar copenhageni (strain Fiocruz L1-130).